A 326-amino-acid polypeptide reads, in one-letter code: ATP synthase subunit b 2 (326 aa).

A helical membrane pass occupies residues 2–22 (LIDWFTVVAQALNFLILVWLL). Composition is skewed to basic and acidic residues over residues 275 to 298 (QQGR…RKEN) and 306 to 326 (PPPE…IGSP). The segment at 275-326 (QQGRKEGRAVQNWDKAESEIRKENLSPAKTEPPPEAKAKPKPEEPKPEIGSP) is disordered.

It belongs to the ATPase B chain family. In terms of assembly, F-type ATPases have 2 components, F(1) - the catalytic core - and F(0) - the membrane proton channel. F(1) has five subunits: alpha(3), beta(3), gamma(1), delta(1), epsilon(1). F(0) has three main subunits: a(1), b(2) and c(10-14). The alpha and beta chains form an alternating ring which encloses part of the gamma chain. F(1) is attached to F(0) by a central stalk formed by the gamma and epsilon chains, while a peripheral stalk is formed by the delta and b chains.

The protein localises to the cell inner membrane. F(1)F(0) ATP synthase produces ATP from ADP in the presence of a proton or sodium gradient. F-type ATPases consist of two structural domains, F(1) containing the extramembraneous catalytic core and F(0) containing the membrane proton channel, linked together by a central stalk and a peripheral stalk. During catalysis, ATP synthesis in the catalytic domain of F(1) is coupled via a rotary mechanism of the central stalk subunits to proton translocation. In terms of biological role, component of the F(0) channel, it forms part of the peripheral stalk, linking F(1) to F(0). This Albidiferax ferrireducens (strain ATCC BAA-621 / DSM 15236 / T118) (Rhodoferax ferrireducens) protein is ATP synthase subunit b 2.